The chain runs to 318 residues: NAC domain-containing protein 68 (318 aa).

The region spanning 21-175 (LPPGFRFHPT…EWVLCRLYNK (155 aa)) is the NAC domain.

As to expression, expressed in stems, leaf blades and callus. Weakly expressed in developing flowers.

The protein localises to the nucleus. Probable transcription factor involved in stress response. This is NAC domain-containing protein 68 from Oryza sativa subsp. japonica (Rice).